The primary structure comprises 574 residues: UvrABC system protein C (574 aa).

In terms of domain architecture, GIY-YIG spans 12–92 (KKPGVYIFKN…IYIHKPKYNI (81 aa)). Residues 200–235 (EEVKNYLQKAMMDYAKIKNYEKAAQMRDTLFKLENL) enclose the UVR domain.

Belongs to the UvrC family. As to quaternary structure, interacts with UvrB in an incision complex.

It is found in the cytoplasm. Functionally, the UvrABC repair system catalyzes the recognition and processing of DNA lesions. UvrC both incises the 5' and 3' sides of the lesion. The N-terminal half is responsible for the 3' incision and the C-terminal half is responsible for the 5' incision. This Petrotoga mobilis (strain DSM 10674 / SJ95) protein is UvrABC system protein C.